Consider the following 418-residue polypeptide: Tyrosine--tRNA ligase 1 (418 aa).

Residue tyrosine 34 coordinates L-tyrosine. The short motif at 39 to 48 (PTADSLHIGH) is the 'HIGH' region element. Residues tyrosine 169 and glutamine 173 each coordinate L-tyrosine. The short motif at 230–234 (KFGKT) is the 'KMSKS' region element. Residue lysine 233 participates in ATP binding. Residues 352–418 (TVLIDLLVES…GKKKYFLIRY (67 aa)) enclose the S4 RNA-binding domain.

Belongs to the class-I aminoacyl-tRNA synthetase family. TyrS type 1 subfamily. As to quaternary structure, homodimer.

Its subcellular location is the cytoplasm. The catalysed reaction is tRNA(Tyr) + L-tyrosine + ATP = L-tyrosyl-tRNA(Tyr) + AMP + diphosphate + H(+). In terms of biological role, catalyzes the attachment of tyrosine to tRNA(Tyr) in a two-step reaction: tyrosine is first activated by ATP to form Tyr-AMP and then transferred to the acceptor end of tRNA(Tyr). This Bacillus anthracis protein is Tyrosine--tRNA ligase 1.